A 312-amino-acid chain; its full sequence is Acetyl-coenzyme A carboxylase carboxyl transferase subunit alpha (312 aa).

One can recognise a CoA carboxyltransferase C-terminal domain in the interval 36-286 (RLDKEVKSIY…KEYFLDALRT (251 aa)).

Belongs to the AccA family. As to quaternary structure, acetyl-CoA carboxylase is a heterohexamer composed of biotin carboxyl carrier protein (AccB), biotin carboxylase (AccC) and two subunits each of ACCase subunit alpha (AccA) and ACCase subunit beta (AccD).

The protein localises to the cytoplasm. It catalyses the reaction N(6)-carboxybiotinyl-L-lysyl-[protein] + acetyl-CoA = N(6)-biotinyl-L-lysyl-[protein] + malonyl-CoA. The protein operates within lipid metabolism; malonyl-CoA biosynthesis; malonyl-CoA from acetyl-CoA: step 1/1. In terms of biological role, component of the acetyl coenzyme A carboxylase (ACC) complex. First, biotin carboxylase catalyzes the carboxylation of biotin on its carrier protein (BCCP) and then the CO(2) group is transferred by the carboxyltransferase to acetyl-CoA to form malonyl-CoA. The polypeptide is Acetyl-coenzyme A carboxylase carboxyl transferase subunit alpha (Helicobacter pylori (strain ATCC 700392 / 26695) (Campylobacter pylori)).